Reading from the N-terminus, the 863-residue chain is Facilitated trehalose transporter Tret1 (863 aa).

Residues 1 to 208 are disordered; sequence MSGRDNRGAG…RIGFQQQKAT (208 aa). The Cytoplasmic portion of the chain corresponds to 1–398; the sequence is MSGRDNRGAG…VYRPTTNPIY (398 aa). Positions 28-46 are enriched in basic and acidic residues; sequence KLKEKLTRAGEELGYHRVE. The segment covering 47–59 has biased composition (polar residues); the sequence is SNLSASNTGTSLD. Residues 72–85 are compositionally biased toward low complexity; that stretch reads AAPQRHPQQQFPHL. Composition is skewed to polar residues over residues 114–129 and 177–187; these read PPQQ…RSSG and KPQQQGNNKAA. Serine 254, serine 255, and serine 256 each carry phosphoserine. A disordered region spans residues 286–307; it reads VLQGSSTDSDEEGDDAEHKRLI. Phosphoserine occurs at positions 326 and 328. Residues 332–354 are disordered; the sequence is FLTSRQNFQQQRSISTDSRKSRR. Residues 336-347 show a composition bias toward polar residues; sequence RQNFQQQRSIST. The helical transmembrane segment at 399–419 threads the bilayer; it reads IWTQVLAALSVSLGSLVVGFA. At 420–446 the chain is on the extracellular side; sequence SAYTSPALVSMTNTNLTSFVVTPQAAS. Asparagine 434 carries N-linked (GlcNAc...) asparagine glycosylation. Residues 447 to 467 traverse the membrane as a helical segment; it reads WVGGIMPLAGLAGGIAGGPFI. Residues 468–479 are Cytoplasmic-facing; sequence EYLGRRNTILAT. Residues 480-500 form a helical membrane-spanning segment; that stretch reads AVPFIISWLLIACAVNVVMVL. Residues 501 to 503 lie on the Extracellular side of the membrane; that stretch reads CGR. Residues 504–524 form a helical membrane-spanning segment; that stretch reads FLAGFCVGIASLSLPVYLGET. The Cytoplasmic portion of the chain corresponds to 525 to 530; that stretch reads VQPEVR. Residues 531–551 form a helical membrane-spanning segment; the sequence is GTLGLLPTAFGNIGILLCFVA. Residues 552 to 558 are Extracellular-facing; that stretch reads GTYMDWS. A helical membrane pass occupies residues 559-579; sequence MLAFLGGTLPVPFLILMFLIP. Topologically, residues 580 to 642 are cytoplasmic; it reads ETPRWYVSRG…ELLKRSNLKP (63 aa). The chain crosses the membrane as a helical span at residues 643–663; it reads LSISLGLMFFQQLSGINAVIF. Residues 664–679 are Extracellular-facing; that stretch reads YTVQIFQDAGSTIDGN. The chain crosses the membrane as a helical span at residues 680–700; the sequence is VCTIIVGVVNFMATFIATVLI. The Cytoplasmic segment spans residues 701 to 706; that stretch reads DRAGRK. Residues 707 to 727 form a helical membrane-spanning segment; it reads ILLYVSNVAMILTLFVLGGFF. Topologically, residues 728–746 are extracellular; that stretch reads YCKSTGMDTSNVGWLPLSC. Residues 747–767 traverse the membrane as a helical segment; sequence FVVYILGFSLGFGPIPWLMMG. Residues 768–773 lie on the Cytoplasmic side of the membrane; that stretch reads EILPAK. Residues 774–794 form a helical membrane-spanning segment; the sequence is IRGSAASVATAFNWSCTFVVT. Residues 795-807 lie on the Extracellular side of the membrane; it reads KSFQDMIDVMGAH. Residues 808–828 form a helical membrane-spanning segment; that stretch reads GAFWMFGAICFVGLFFVIFYV. At 829-863 the chain is on the cytoplasmic side; it reads PETQGKTLEDIERKMMGRVRRMSSVANIKPLSFNM. Serine 851 and serine 852 each carry phosphoserine.

It belongs to the major facilitator superfamily. Sugar transporter (TC 2.A.1.1) family. Trehalose transporter subfamily.

The protein localises to the cell membrane. Its function is as follows. Low-capacity facilitative transporter for trehalose. Does not transport maltose, sucrose or lactose. Mediates the bidirectional transfer of trehalose. Responsible for the transport of trehalose synthesized in the fat body and the incorporation of trehalose into other tissues that require a carbon source, thereby regulating trehalose levels in the hemolymph. This chain is Facilitated trehalose transporter Tret1, found in Drosophila mojavensis (Fruit fly).